We begin with the raw amino-acid sequence, 330 residues long: Serine/threonine-protein phosphatase PP1-alpha catalytic subunit (330 aa).

Position 2 is an N-acetylserine (S2). Residues S2 and S22 each carry the phosphoserine modification. The Mn(2+) site is built by D64, H66, D92, and N124. H125 acts as the Proton donor in catalysis. H173 and H248 together coordinate Mn(2+). An N6-acetyllysine modification is found at K305. Y306 carries the phosphotyrosine modification. The interval 306-330 is disordered; that stretch reads YGQFSGLNPGGRPITPPRNSAKAKK. At T320 the chain carries Phosphothreonine. At S325 the chain carries Phosphoserine.

The protein belongs to the PPP phosphatase family. PP-1 subfamily. PP1 comprises a catalytic subunit, PPP1CA, PPP1CB or PPP1CC, which is folded into its native form by inhibitor 2 and glycogen synthetase kinase 3, and then complexed to one or several targeting or regulatory subunits. PPP1R12A, PPP1R12B and PPP1R12C mediate binding to myosin. PPP1R3A (in skeletal muscle), PPP1R3B (in liver), PPP1R3C, PPP1R3D and PPP1R3F (in brain) mediate binding to glycogen. Interacts with PPP1R39. Interacts with BTBD10. Interacts with KCTD20. Interacts with PPP1R9A and PPP1R9B. Part of a complex containing PPP1R15B, PP1 and NCK1/2. Interacts with PHACTR4; which acts as an activator of PP1 activity. Interacts with PPP1R15A and PPP1R15B; the interactions mediate binding to EIF2S1. Interacts with PPP1R7. Interacts with YLPM1. Forms a complex with ILF2, ILF3, YLPM1, KHDRBS1, RBMX and NCOA5. Interacts with NOM1 and PPP1R8. Interacts with PPP1R16B. Interacts with RPSA only in the presence of PPP1R16B. Component of the PNUTS-PP1 phosphatase complex, composed of PPP1R10/PNUTS, TOX4, WDR82, and PPP1CA or PPP1CB or PPP1CC. Interacts with PPP1R10/PNUTS and PPP1R8. Interacts with WDR82 in the presence of PPP1R10/PNUTS. Interacts with TRIM28; the interaction dephosphorylates TRIM28 on 'Ser-824' and forms a complex at the p21 promoter site. Interacts with isoform 1 and isoform 4 of NEK2. Interacts with FER; this promotes phosphorylation at Thr-320. Interacts with DAB2; the interaction is mutually exclusive with the AXIN1:PPP1CA interaction. Interacts with FOXP3. Interacts with CENPA. Interacts with ATG16L1. Found in a complex with PPP1CA, PPP1CC, SHC1 and PEAK1. Interacts with tensin TNS1. Interacts with SAXO4, PPP1R21, PPP1R26, PPP1R27, PPP1R35, PPP1R36, PPP1R37, SH3RF2, ELFN1 and ELFN2. Interacts with TPRN; the interaction results in inhibition of PPC1A phosphatase activity. Interacts with SKA1 (via C-terminus); the interaction is direct and required for the recruitment of PP1 to the kinetochore. Interacts with the KNL1 complex subunit KNL1; the interaction is direct and mutually exclusive with KNL1 binding to microtubules. Component of the SHOC2-MRAS-PP1c (SMP) complex consisting of SHOC2, GTP-bound M-Ras/MRAS and the catalytic subunit of protein phosphatase 1 (either PPP1CA, PPP1CB or PPP1CC). SHOC2 and PP1c preferably bind M-Ras/MRAS, but they also bind K-Ras/KRAS, N-Ras/NRAS and H-Ras/HRAS; these interactions are GTP-dependent and both SHOC2 and PP1c are required to form a stable complex. Interacts with SHOC2 in the absence of Ras GTPases. In terms of assembly, (Microbial infection) Interacts with HHV-1 ICP34.5. As to quaternary structure, (Microbial infection) Interacts with Venezuelan equine encephalitis virus (VEEV) capsid protein; this interaction dephosphorylates the capsid protein, which increases its ability to bind to the viral genome. Requires Fe cation as cofactor. Mn(2+) serves as cofactor. Post-translationally, phosphorylated. Dephosphorylated at Thr-320 in the presence of ionizing radiation.

It is found in the cytoplasm. Its subcellular location is the nucleus. It localises to the nucleoplasm. The protein resides in the nucleolus. The enzyme catalyses O-phospho-L-seryl-[protein] + H2O = L-seryl-[protein] + phosphate. It catalyses the reaction O-phospho-L-threonyl-[protein] + H2O = L-threonyl-[protein] + phosphate. The phosphatase activity of the PPP1R15A-PP1 complex toward EIF2S1 is specifically inhibited by Salubrinal, a drug that protects cells from endoplasmic reticulum stress. Its function is as follows. Protein phosphatase that associates with over 200 regulatory proteins to form highly specific holoenzymes which dephosphorylate hundreds of biological targets. Protein phosphatase 1 (PP1) is essential for cell division, transcription elongation, and participates in the regulation of glycogen metabolism, muscle contractility and protein synthesis. Involved in regulation of ionic conductances and long-term synaptic plasticity. May play an important role in dephosphorylating substrates such as the postsynaptic density-associated Ca(2+)/calmodulin dependent protein kinase II. Catalytic component of the PNUTS-PP1 protein phosphatase complex, a protein phosphatase 1 (PP1) complex that promotes RNA polymerase II transcription pause-release, allowing transcription elongation: the PNUTS-PP1 complex mediates the release of RNA polymerase II from promoter-proximal region of genes by catalyzing dephosphorylation of proteins involved in transcription, such as AFF4, CDK9, MEPCE, INTS12, NCBP1, POLR2M/GDOWN1 and SUPT6H. The PNUTS-PP1 complex also regulates transcription termination by mediating dephosphorylation of SUPT5H in termination zones downstream of poly(A) sites, thereby promoting deceleration of RNA polymerase II transcription. PNUTS-PP1 complex is also involved in the response to replication stress by mediating dephosphorylation of POLR2A at 'Ser-5' of the CTD, promoting RNA polymerase II degradation. PNUTS-PP1 also plays a role in the control of chromatin structure and cell cycle progression during the transition from mitosis into interphase. Regulates NEK2 function in terms of kinase activity and centrosome number and splitting, both in the presence and absence of radiation-induced DNA damage. Regulator of neural tube and optic fissure closure, and enteric neural crest cell (ENCCs) migration during development. In balance with CSNK1D and CSNK1E, determines the circadian period length, through the regulation of the speed and rhythmicity of PER1 and PER2 phosphorylation. May dephosphorylate CSNK1D and CSNK1E. Dephosphorylates the 'Ser-418' residue of FOXP3 in regulatory T-cells (Treg) from patients with rheumatoid arthritis, thereby inactivating FOXP3 and rendering Treg cells functionally defective. Dephosphorylates CENPA. Dephosphorylates the 'Ser-139' residue of ATG16L1 causing dissociation of ATG12-ATG5-ATG16L1 complex, thereby inhibiting autophagy. Together with PPP1CC (PP1-gamma subunit), dephosphorylates IFIH1/MDA5 and RIG-I leading to their activation and a functional innate immune response. Core component of the SHOC2-MRAS-PP1c (SMP) holophosphatase complex that regulates the MAPK pathway activation. The SMP complex specifically dephosphorylates the inhibitory phosphorylation at 'Ser-259' of RAF1 kinase, 'Ser-365' of BRAF kinase and 'Ser-214' of ARAF kinase, stimulating their kinase activities. The SMP complex enhances the dephosphorylation activity and substrate specificity of PP1c. (Microbial infection) Necessary for alphaviruses replication. The chain is Serine/threonine-protein phosphatase PP1-alpha catalytic subunit (PPP1CA) from Homo sapiens (Human).